Reading from the N-terminus, the 347-residue chain is D-alanine--D-alanine ligase (347 aa).

In terms of domain architecture, ATP-grasp spans 138–339 (KILCSHAGIP…YSQVIETILA (202 aa)). 171-226 (SDRFTFPLFVKPVDAGSSFGCTFVDFFEQLPVAIEHALQHGKSAIVEPALDAPEVF) is an ATP binding site. The Mg(2+) site is built by aspartate 296, glutamate 308, and asparagine 310.

It belongs to the D-alanine--D-alanine ligase family. The cofactor is Mg(2+). Mn(2+) is required as a cofactor.

Its subcellular location is the cytoplasm. It catalyses the reaction 2 D-alanine + ATP = D-alanyl-D-alanine + ADP + phosphate + H(+). It functions in the pathway cell wall biogenesis; peptidoglycan biosynthesis. In terms of biological role, cell wall formation. This Tropheryma whipplei (strain Twist) (Whipple's bacillus) protein is D-alanine--D-alanine ligase.